The primary structure comprises 532 residues: Cocaine esterase (532 aa).

Residue Q1 is modified to Pyrrolidone carboxylic acid. C69 and C96 are oxidised to a cystine. Catalysis depends on S201, which acts as the Acyl-ester intermediate. N249 carries N-linked (GlcNAc...) asparagine glycosylation. A disulfide bond links C253 and C264. Catalysis depends on charge relay system residues E318 and H430. The short motif at 529–532 (HTEL) is the Prevents secretion from ER element.

It belongs to the type-B carboxylesterase/lipase family. As to quaternary structure, monomer.

Its subcellular location is the endoplasmic reticulum lumen. The enzyme catalyses a carboxylic ester + H2O = an alcohol + a carboxylate + H(+). The catalysed reaction is cocaine + H2O = ecgonine methyl ester + benzoate + H(+). It catalyses the reaction 2-(5Z,8Z,11Z,14Z-eicosatetraenoyl)-glycerol + H2O = glycerol + (5Z,8Z,11Z,14Z)-eicosatetraenoate + H(+). It carries out the reaction prostaglandin E2 1-glyceryl ester + H2O = prostaglandin E2 + glycerol + H(+). The enzyme catalyses prostaglandin F2alpha 1-glyceryl ester + H2O = prostaglandin F2alpha + glycerol + H(+). Functionally, involved in the detoxification of xenobiotics and in the activation of ester and amide prodrugs. Converts monoacylglycerides to free fatty acids and glycerol. Hydrolyzes of 2-arachidonoylglycerol and prostaglandins. In Oryctolagus cuniculus (Rabbit), this protein is Cocaine esterase (CES2).